The following is a 150-amino-acid chain: Small ribosomal subunit protein uS11y (150 aa).

The disordered stretch occupies residues 129-150; it reads EDVTPVPTDSTRRKGGRRGRRL. Residues 141-150 are compositionally biased toward basic residues; sequence RKGGRRGRRL.

This sequence belongs to the universal ribosomal protein uS11 family.

The polypeptide is Small ribosomal subunit protein uS11y (Zea mays (Maize)).